We begin with the raw amino-acid sequence, 66 residues long: Protein translocase subunit SecE (66 aa).

A helical transmembrane segment spans residues 29-49 (LVASTLVVVVAVFIFSLTCLV).

It belongs to the SecE/SEC61-gamma family. In terms of assembly, component of the Sec protein translocase complex. Heterotrimer consisting of SecY, SecE and SecG subunits. The heterotrimers can form oligomers, although 1 heterotrimer is thought to be able to translocate proteins. Interacts with the ribosome. Interacts with SecDF, and other proteins may be involved. Interacts with SecA.

It is found in the cell inner membrane. Essential subunit of the Sec protein translocation channel SecYEG. Clamps together the 2 halves of SecY. May contact the channel plug during translocation. In Rickettsia rickettsii, this protein is Protein translocase subunit SecE.